Consider the following 202-residue polypeptide: Recombination protein RecR (202 aa).

The C4-type zinc-finger motif lies at 56–71 (CVVCGTVSDKEHCRIC). The region spanning 79–179 (TVICVVEEPK…TVSRLASGLP (101 aa)) is the Toprim domain.

It belongs to the RecR family.

In terms of biological role, may play a role in DNA repair. It seems to be involved in an RecBC-independent recombinational process of DNA repair. It may act with RecF and RecO. This is Recombination protein RecR from Rhodococcus jostii (strain RHA1).